We begin with the raw amino-acid sequence, 574 residues long: Putative diflavin flavoprotein A 3 (574 aa).

The zinc metallo-hydrolase stretch occupies residues 43-236 (QNGTTYNSFL…PSVKMIATGH (194 aa)). Positions 92, 94, 96, 159, 178, and 236 each coordinate Fe cation. The 145-residue stretch at 265-409 (IGVFYVSEYG…DLGQWVTRDR (145 aa)) folds into the Flavodoxin-like domain. The tract at residues 410 to 574 (SIKAMKSLGA…VHHRKVGNHY (165 aa)) is flavodoxin-reductase-like.

The protein in the N-terminal section; belongs to the zinc metallo-hydrolase group 3 family. In the C-terminal section; belongs to the flavodoxin reductase family. Fe cation serves as cofactor.

Functionally, mediates electron transfer from NADH to oxygen, reducing it to water. This modular protein has 3 redox cofactors, in other organisms the same activity requires 2 or 3 proteins. The protein is Putative diflavin flavoprotein A 3 (dfa3) of Nostoc sp. (strain PCC 7120 / SAG 25.82 / UTEX 2576).